Consider the following 166-residue polypeptide: Protein-export protein SecB (166 aa).

The span at 1 to 16 (MTDTSAAGNPTPGQQP) shows a compositional bias: polar residues. Positions 1–21 (MTDTSAAGNPTPGQQPANPPS) are disordered.

It belongs to the SecB family. In terms of assembly, homotetramer, a dimer of dimers. One homotetramer interacts with 1 SecA dimer.

It is found in the cytoplasm. One of the proteins required for the normal export of preproteins out of the cell cytoplasm. It is a molecular chaperone that binds to a subset of precursor proteins, maintaining them in a translocation-competent state. It also specifically binds to its receptor SecA. This is Protein-export protein SecB from Hyphomonas neptunium (strain ATCC 15444).